A 182-amino-acid chain; its full sequence is Dephospho-CoA kinase (182 aa).

In terms of domain architecture, DPCK spans 4-182; that stretch reads VVAITGGIGS…IINNDHKIMT (179 aa). ATP is bound at residue 12 to 17; it reads GSGKTT.

Belongs to the CoaE family.

It localises to the cytoplasm. The enzyme catalyses 3'-dephospho-CoA + ATP = ADP + CoA + H(+). Its pathway is cofactor biosynthesis; coenzyme A biosynthesis; CoA from (R)-pantothenate: step 5/5. In terms of biological role, catalyzes the phosphorylation of the 3'-hydroxyl group of dephosphocoenzyme A to form coenzyme A. The polypeptide is Dephospho-CoA kinase (Aliivibrio fischeri (strain ATCC 700601 / ES114) (Vibrio fischeri)).